The following is a 155-amino-acid chain: Protein-export protein SecB (155 aa).

The protein belongs to the SecB family. Homotetramer, a dimer of dimers. One homotetramer interacts with 1 SecA dimer.

It localises to the cytoplasm. One of the proteins required for the normal export of preproteins out of the cell cytoplasm. It is a molecular chaperone that binds to a subset of precursor proteins, maintaining them in a translocation-competent state. It also specifically binds to its receptor SecA. This is Protein-export protein SecB from Cronobacter sakazakii (strain ATCC BAA-894) (Enterobacter sakazakii).